Here is a 673-residue protein sequence, read N- to C-terminus: Cyclic nucleotide-binding domain-containing protein 2 (673 aa).

Polar residues predominate over residues 1-15 (MNRSANPEAASSTSH). Residues 1–89 (MNRSANPEAA…PQPKDRPGVQ (89 aa)) form a disordered region. Basic and acidic residues predominate over residues 43–86 (PADKSDTTESKSESGSDSRSEEDKESPASIKEIKAETPQPKDRP). A nucleoside 3',5'-cyclic phosphate is bound at residue 206–329 (CYRSYTESLQ…ETQYRYNFFR (124 aa)).

Testis-specific. Exclusively expressed in testicular germ cells while it is not present in mature sperm (at protein level).

It is found in the cytoplasm. Its subcellular location is the cytosol. Essential for male fertility. Plays an important role in spermatogenesis and regulates sperm motility by controlling the development of the flagellar bending of sperm. The sequence is that of Cyclic nucleotide-binding domain-containing protein 2 (Cnbd2) from Mus musculus (Mouse).